The sequence spans 775 residues: Subtilisin-like protease SBT1.5 (775 aa).

An N-terminal signal peptide occupies residues 1–19; sequence MAFFFYFFFLLTLSSPSSS. Residues 20 to 103 constitute a propeptide, activation peptide; it reads ASSSNSLTYI…VIPEQVRHLH (84 aa). The Inhibitor I9 domain occupies 27-103; it reads TYIVHVDHEA…VIPEQVRHLH (77 aa). In terms of domain architecture, Peptidase S8 spans 107-617; the sequence is SPEFLGLRST…SGHVHPTKAM (511 aa). The active-site Charge relay system is D137. N-linked (GlcNAc...) asparagine glycosylation occurs at N196. H210 (charge relay system) is an active-site residue. In terms of domain architecture, PA spans 367–459; that stretch reads MYPLVYGGSL…VGASGGDEIR (93 aa). S549 (charge relay system) is an active-site residue. 3 N-linked (GlcNAc...) asparagine glycosylation sites follow: N599, N638, and N762.

This sequence belongs to the peptidase S8 family.

The protein resides in the secreted. The chain is Subtilisin-like protease SBT1.5 from Arabidopsis thaliana (Mouse-ear cress).